The sequence spans 709 residues: Early transcription factor 82 kDa subunit (709 aa).

This sequence belongs to the poxviridae VETF large subunit family. As to quaternary structure, heterodimer of a 70 kDa and a 82 kDa subunit. Part of the early transcription complex composed of ETF, RAP94, and the DNA-directed RNA polymerase.

It localises to the virion. Acts with RNA polymerase to initiate transcription from early gene promoters. Is recruited by the RPO-associated protein of 94 kDa (RAP94) to form the early transcription complex, which also contains the core RNA polymerase. ETF heterodimer binds to early gene promoters. In Vertebrata (FPV), this protein is Early transcription factor 82 kDa subunit (VETFL).